A 226-amino-acid polypeptide reads, in one-letter code: Large ribosomal subunit protein uL1 (226 aa).

Belongs to the universal ribosomal protein uL1 family. In terms of assembly, part of the 50S ribosomal subunit.

Binds directly to 23S rRNA. The L1 stalk is quite mobile in the ribosome, and is involved in E site tRNA release. Functionally, protein L1 is also a translational repressor protein, it controls the translation of the L11 operon by binding to its mRNA. This chain is Large ribosomal subunit protein uL1, found in Mycoplasma genitalium (strain ATCC 33530 / DSM 19775 / NCTC 10195 / G37) (Mycoplasmoides genitalium).